Here is a 117-residue protein sequence, read N- to C-terminus: Basic phospholipase A2 pseudexin A chain (117 aa).

7 disulfide bridges follow: Cys-11/Cys-71, Cys-27/Cys-117, Cys-29/Cys-45, Cys-44/Cys-98, Cys-51/Cys-91, Cys-60/Cys-84, and Cys-78/Cys-89. Residues Tyr-28, Gly-30, and Gly-32 each coordinate Ca(2+). Residue His-48 is part of the active site. Asp-49 serves as a coordination point for Ca(2+). Residue Asp-92 is part of the active site.

This sequence belongs to the phospholipase A2 family. Group I subfamily. D49 sub-subfamily. Requires Ca(2+) as cofactor. In terms of tissue distribution, expressed by the venom gland.

The protein localises to the secreted. It catalyses the reaction a 1,2-diacyl-sn-glycero-3-phosphocholine + H2O = a 1-acyl-sn-glycero-3-phosphocholine + a fatty acid + H(+). Functionally, PLA2 catalyzes the calcium-dependent hydrolysis of the 2-acyl groups in 3-sn-phosphoglycerides. The sequence is that of Basic phospholipase A2 pseudexin A chain from Pseudechis porphyriacus (Red-bellied black snake).